The chain runs to 152 residues: Large ribosomal subunit protein eL29 (152 aa).

Residues methionine 1 to serine 26 show a composition bias toward basic residues. Residues methionine 1–leucine 32 are disordered. Lysine 5 carries the N6-methyllysine modification. The residue at position 31 (serine 31) is a Phosphoserine. The residue at position 33 (lysine 33) is an N6-acetyllysine. Positions cysteine 119–glutamate 152 are disordered. Low complexity predominate over residues proline 121–glutamate 152.

It belongs to the eukaryotic ribosomal protein eL29 family. As to quaternary structure, component of the large ribosomal subunit.

It localises to the cytoplasm. In terms of biological role, component of the large ribosomal subunit. The ribosome is a large ribonucleoprotein complex responsible for the synthesis of proteins in the cell. This Bos taurus (Bovine) protein is Large ribosomal subunit protein eL29 (RPL29).